The chain runs to 186 residues: Peptidyl-tRNA hydrolase (186 aa).

Tyrosine 15 is a binding site for tRNA. The active-site Proton acceptor is the histidine 20. TRNA-binding residues include tyrosine 64, asparagine 66, and asparagine 112.

The protein belongs to the PTH family. As to quaternary structure, monomer.

The protein localises to the cytoplasm. It catalyses the reaction an N-acyl-L-alpha-aminoacyl-tRNA + H2O = an N-acyl-L-amino acid + a tRNA + H(+). Hydrolyzes ribosome-free peptidyl-tRNAs (with 1 or more amino acids incorporated), which drop off the ribosome during protein synthesis, or as a result of ribosome stalling. Its function is as follows. Catalyzes the release of premature peptidyl moieties from peptidyl-tRNA molecules trapped in stalled 50S ribosomal subunits, and thus maintains levels of free tRNAs and 50S ribosomes. The protein is Peptidyl-tRNA hydrolase of Azobacteroides pseudotrichonymphae genomovar. CFP2.